A 739-amino-acid chain; its full sequence is Sulfate transporter (739 aa).

The disordered stretch occupies residues M1–P44. At S12 the chain carries Phosphoserine. Transmembrane regions (helical) follow at residues M112–L132 and P137–S157. A glycan (N-linked (GlcNAc...) asparagine) is linked at N205. The next 2 helical transmembrane spans lie at F227 to Y247 and G255 to L275. N357 carries N-linked (GlcNAc...) asparagine glycosylation. The next 4 membrane-spanning stretches (helical) occupy residues L378–V398, A420–L440, L455–F475, and L524–L544. Residues T568–A719 enclose the STAS domain.

Belongs to the SLC26A/SulP transporter (TC 2.A.53) family. In terms of processing, N-glycosylated. In terms of tissue distribution, cartilage and intestine. Expressed in the kidney (at protein level).

It localises to the cell membrane. The protein resides in the apical cell membrane. It catalyses the reaction oxalate(in) + sulfate(out) = oxalate(out) + sulfate(in). The enzyme catalyses sulfate(out) + 2 chloride(in) = sulfate(in) + 2 chloride(out). It carries out the reaction oxalate(out) + 2 chloride(in) = oxalate(in) + 2 chloride(out). The catalysed reaction is bromide(in) + chloride(out) = bromide(out) + chloride(in). It catalyses the reaction nitrate(in) + chloride(out) = nitrate(out) + chloride(in). The enzyme catalyses iodide(in) + chloride(out) = iodide(out) + chloride(in). Its function is as follows. Sulfate transporter which mediates sulfate uptake into chondrocytes in order to maintain adequate sulfation of proteoglycans which is needed for cartilage development. Mediates electroneutral anion exchange of sulfate ions for oxalate ions, sulfate and oxalate ions for chloride and/or hydroxyl ions and chloride ions for bromide, iodide and nitrate ions. The coupling of sulfate transport to both hydroxyl and chloride ions likely serves to ensure transport at both acidic pH when most sulfate uptake is mediated by sulfate-hydroxide exchange and alkaline pH when most sulfate uptake is mediated by sulfate-chloride exchange. Essential for chondrocyte proliferation, differentiation and cell size expansion. The protein is Sulfate transporter (Slc26a2) of Rattus norvegicus (Rat).